Consider the following 248-residue polypeptide: Probable transcriptional regulatory protein BARBAKC583_0163 (248 aa).

Belongs to the TACO1 family.

The protein localises to the cytoplasm. This is Probable transcriptional regulatory protein BARBAKC583_0163 from Bartonella bacilliformis (strain ATCC 35685 / KC583 / Herrer 020/F12,63).